Consider the following 129-residue polypeptide: Large ribosomal subunit protein bL12c (129 aa).

A compositionally biased stretch (basic and acidic residues) spans 101–123 (KPIKEGMSKADAEAGKKQLEEAG). The disordered stretch occupies residues 101–129 (KPIKEGMSKADAEAGKKQLEEAGAKATLK).

The protein belongs to the bacterial ribosomal protein bL12 family. In terms of assembly, homodimer. Part of the ribosomal stalk of the 50S ribosomal subunit. Forms a multimeric L10(L12)X complex, where L10 forms an elongated spine to which 2 to 4 L12 dimers bind in a sequential fashion. Binds GTP-bound translation factors.

It localises to the plastid. Its subcellular location is the chloroplast. Its function is as follows. Forms part of the ribosomal stalk which helps the ribosome interact with GTP-bound translation factors. Is thus essential for accurate translation. This chain is Large ribosomal subunit protein bL12c, found in Guillardia theta (Cryptophyte).